Here is a 253-residue protein sequence, read N- to C-terminus: MNTQAATSPQFYLTAPAPCPYLAGEMERKVFTHLVGPRAPEMNDLLTQGGFRRSQNIAYRPACETCRACISVRIVAREFQPNRTMRRVAGVNADLTSSVFAAQPSTEQFSLFRTYLDHRHQQGGMSDMSALDFAIMVEDSHVKTKVIEYRLPKVDEDSDRPGELVAVALSDILSDGLSMVYSFFNPAMEKRSLGTFMVLDHIRRANEMGLPHVYLGYWVNGSRKMGYKIRFLPQEHLLSQGWTRYEPESGVEE.

It belongs to the R-transferase family. Bpt subfamily.

It is found in the cytoplasm. The enzyme catalyses N-terminal L-glutamyl-[protein] + L-leucyl-tRNA(Leu) = N-terminal L-leucyl-L-glutamyl-[protein] + tRNA(Leu) + H(+). It carries out the reaction N-terminal L-aspartyl-[protein] + L-leucyl-tRNA(Leu) = N-terminal L-leucyl-L-aspartyl-[protein] + tRNA(Leu) + H(+). Functionally, functions in the N-end rule pathway of protein degradation where it conjugates Leu from its aminoacyl-tRNA to the N-termini of proteins containing an N-terminal aspartate or glutamate. This is Aspartate/glutamate leucyltransferase from Allorhizobium ampelinum (strain ATCC BAA-846 / DSM 112012 / S4) (Agrobacterium vitis (strain S4)).